The following is a 92-amino-acid chain: Large ribosomal subunit protein eL43 (92 aa).

The Zn(2+) site is built by cysteine 39, cysteine 42, cysteine 57, and cysteine 60.

This sequence belongs to the eukaryotic ribosomal protein eL43 family. In terms of assembly, component of the large ribosomal subunit. Mature ribosomes consist of a small (40S) and a large (60S) subunit. The 40S subunit contains 32 different proteins and 1 molecule of RNA (18S). The 60S subunit contains 45 different proteins and 3 molecules of RNA (25S, 5.8S and 5S). The cofactor is Zn(2+).

It localises to the cytoplasm. In terms of biological role, component of the ribosome, a large ribonucleoprotein complex responsible for the synthesis of proteins in the cell. The small ribosomal subunit (SSU) binds messenger RNAs (mRNAs) and translates the encoded message by selecting cognate aminoacyl-transfer RNA (tRNA) molecules. The large subunit (LSU) contains the ribosomal catalytic site termed the peptidyl transferase center (PTC), which catalyzes the formation of peptide bonds, thereby polymerizing the amino acids delivered by tRNAs into a polypeptide chain. The nascent polypeptides leave the ribosome through a tunnel in the LSU and interact with protein factors that function in enzymatic processing, targeting, and the membrane insertion of nascent chains at the exit of the ribosomal tunnel. The protein is Large ribosomal subunit protein eL43 of Candida albicans (strain SC5314 / ATCC MYA-2876) (Yeast).